A 372-amino-acid chain; its full sequence is MHC class I-like protein MILL2 (372 aa).

Positions 1-26 (MEASSGTAGPAVLLLILALLLTESQG) are cleaved as a signal peptide. Residues 28–119 (RSQGTHTLRY…MINQKGHDKG (92 aa)) form an alpha-1 region. 3 disulfide bridges follow: Cys78–Cys89, Cys129–Cys191, and Cys230–Cys287. Residues 120 to 210 (PYTLQATLDC…SLSNVLPDTG (91 aa)) are alpha-2. N-linked (GlcNAc...) asparagine glycans are attached at residues Asn134, Asn234, and Asn293. Positions 192-302 (PARLQRHLAS…NRTIMQTAVS (111 aa)) constitute an Ig-like C1-type domain. The interval 211–339 (SPVVIVTCRN…VVDGGLVTGN (129 aa)) is alpha-3. The tract at residues 308–349 (WPSASWATRQEAEGPHRTHNDHVVDGGLVTGNANKDSPDASS) is disordered. The span at 317–331 (QEAEGPHRTHNDHVV) shows a compositional bias: basic and acidic residues. Residues 340-348 (ANKDSPDAS) form a connecting peptide region. Ser349 carries the GPI-anchor amidated serine lipid modification. Positions 350–372 (CATASAISAFPVVVLSVALPRAN) are cleaved as a propeptide — removed in mature form.

Belongs to the MHC class I family. Heterodimer with B2M. As to expression, ubiquitously expressed in neonatal and adult tissues.

It localises to the cell membrane. Functionally, binds to heparan sulfate proteoglycans on the surface of fibroblast cells. This Rattus norvegicus (Rat) protein is MHC class I-like protein MILL2.